The chain runs to 548 residues: Mannosyltransferase APTG1 (548 aa).

The disordered stretch occupies residues 1-23 (MDIRKRKNAGGDGDGGADGASVN). 3 consecutive transmembrane segments (helical) span residues 41 to 61 (IFLF…TYFN), 98 to 118 (LFAF…YIMI), and 146 to 166 (GNVA…FFCL). Asn-167 carries an N-linked (GlcNAc...) asparagine glycan. A run of 7 helical transmembrane segments spans residues 169–189 (TFSN…WPCI), 204–224 (LVIA…WLYV), 238–258 (FIIL…CLLD), 260–280 (LMYG…FLSS), 294–314 (FTQG…AGII), 320–340 (KLSA…HKEF), and 342–362 (FVLP…AQME). A glycan (N-linked (GlcNAc...) asparagine) is linked at Asn-382. The helical transmembrane segment at 392–412 (LSVYFLLATNIPMALYMSLFH) threads the bilayer. Residue Asn-490 is glycosylated (N-linked (GlcNAc...) asparagine).

It belongs to the glycosyltransferase 22 family. Mostly expressed, mainly in vascular tissues, in leaves, roots, stems, flowers, siliques and pollen, and, to a lower extent, in seedlings.

The protein resides in the endoplasmic reticulum membrane. Functionally, mannosyltransferase involved in glycosylphosphatidylinositol-anchor biosynthesis. Required for the pollen tube micropylar guidance and embryo development by regulating GPI-anchor mediated protein localization (e.g. COBL10 and A36). This chain is Mannosyltransferase APTG1, found in Arabidopsis thaliana (Mouse-ear cress).